A 316-amino-acid polypeptide reads, in one-letter code: M-phase inducer phosphatase cdc-25.3 (316 aa).

The interval 35–65 (QNRQHSSAISHISNSSPPTRKRSIDGGYTSG) is disordered. The span at 39–50 (HSSAISHISNSS) shows a compositional bias: low complexity. The 107-residue stretch at 136 to 242 (FMQKYILIDC…FYAFTRGLEK (107 aa)) folds into the Rhodanese domain.

The protein belongs to the MPI phosphatase family.

It carries out the reaction O-phospho-L-tyrosyl-[protein] + H2O = L-tyrosyl-[protein] + phosphate. This is M-phase inducer phosphatase cdc-25.3 (cdc-25.3) from Caenorhabditis elegans.